A 213-amino-acid polypeptide reads, in one-letter code: MSQKVLPTKINLIQFRRQLRLITVIKRLLENKREVLLLYLRTYASEYEKIYNEVNEEMKKVYESYLQAVASEGISNIEEIALSQKPSLEVSSSIKVIFGVKVPTIKLDKSTIPSKPFSDVETSPYLSESYEEMTEAFNKIIELVELESTIRSLVSELRKTQRLINSIDNYILPFYRGSIKFIKQILEDRQREEFSRLKIIRRILQRRRESGSG.

The protein belongs to the V-ATPase D subunit family. Has multiple subunits with at least A(3), B(3), C, D, E, F, H, I and proteolipid K(x).

The protein localises to the cell membrane. Functionally, component of the A-type ATP synthase that produces ATP from ADP in the presence of a proton gradient across the membrane. This Saccharolobus islandicus (strain Y.N.15.51 / Yellowstone #2) (Sulfolobus islandicus) protein is A-type ATP synthase subunit D.